Reading from the N-terminus, the 90-residue chain is [Leu8]-phyllolitorin (90 aa).

The N-terminal stretch at 1 to 30 (MSAVPFTRVLLISGFLAHLLLSTFVTLTVC) is a signal peptide. The propeptide occupies 31 to 48 (KEVTEESDDLSKRNVLQR). Position 49 is a pyrrolidone carboxylic acid (Gln49). The residue at position 57 (Met57) is a Methionine amide. Residues 61–90 (SLENTNRRSDEDMEISALFRGSPLKVKRSD) constitute a propeptide that is removed on maturation.

The protein belongs to the bombesin/neuromedin-B/ranatensin family. In terms of tissue distribution, expressed by the skin glands.

The protein localises to the secreted. This is [Leu8]-phyllolitorin from Phyllomedusa sauvagei (Sauvage's leaf frog).